A 386-amino-acid polypeptide reads, in one-letter code: FHA domain-containing protein At4g14490 (386 aa).

An FHA domain is found at 28 to 78 (IRVGRIVRGNEIAIKDAGISTKHLRIESDSGNWVIQDLGSSNGTLLNSNAL). The tract at residues 286–311 (KNKGKNKKADQKPLKSFENDEVTDSG) is disordered. The segment covering 292 to 303 (KKADQKPLKSFE) has biased composition (basic and acidic residues).

This Arabidopsis thaliana (Mouse-ear cress) protein is FHA domain-containing protein At4g14490.